The sequence spans 206 residues: Nucleoside triphosphate pyrophosphatase (206 aa).

The active-site Proton acceptor is the aspartate 78.

This sequence belongs to the Maf family. Requires a divalent metal cation as cofactor.

The protein localises to the cytoplasm. It carries out the reaction a ribonucleoside 5'-triphosphate + H2O = a ribonucleoside 5'-phosphate + diphosphate + H(+). It catalyses the reaction a 2'-deoxyribonucleoside 5'-triphosphate + H2O = a 2'-deoxyribonucleoside 5'-phosphate + diphosphate + H(+). Functionally, nucleoside triphosphate pyrophosphatase. May have a dual role in cell division arrest and in preventing the incorporation of modified nucleotides into cellular nucleic acids. In Prochlorococcus marinus (strain MIT 9312), this protein is Nucleoside triphosphate pyrophosphatase.